A 222-amino-acid chain; its full sequence is Large ribosomal subunit protein mL64 (222 aa).

2 disordered regions span residues 14 to 40 (LTAT…PWWP) and 188 to 222 (KRLK…APSS). Residues 144–213 (EKAQADKERR…AALAAAAAQD (70 aa)) adopt a coiled-coil conformation. The Nuclear localization signal signature appears at 184–200 (KKERKRLKEEKQRQKQE). Over residues 188–201 (KRLKEEKQRQKQEA) the composition is skewed to basic and acidic residues. The segment covering 202–216 (RAAALAAAAAQDPAA) has biased composition (low complexity).

Belongs to the mitochondrion-specific ribosomal protein mL64 family. As to quaternary structure, component of the mitochondrial ribosome large subunit (39S) which comprises a 16S rRNA and about 50 distinct proteins. Interacts with GADD45A, GADD45B and GADD45G. Interacts with NR4A1 via the NR4A1 AB domain. Interacts with ATAD3A and ATAD3B.

The protein localises to the mitochondrion. It is found in the nucleus. In terms of biological role, acts as a negative regulator of G1 to S cell cycle phase progression by inhibiting cyclin-dependent kinases. Inhibitory effects are additive with GADD45 proteins but also occur in the absence of GADD45 proteins. Acts as a repressor of the orphan nuclear receptor NR4A1 by inhibiting AB domain-mediated transcriptional activity. May be involved in the hormone-mediated regulation of NR4A1 transcriptional activity. May play a role in mitochondrial protein synthesis. The sequence is that of Large ribosomal subunit protein mL64 (GADD45GIP1) from Chlorocebus aethiops (Green monkey).